The primary structure comprises 772 residues: Glucocorticoid receptor (772 aa).

Positions 1 to 15 (MDSKESLSPPGREEV) are enriched in basic and acidic residues. A disordered region spans residues 1–22 (MDSKESLSPPGREEVPSSVLRP). The modulating stretch occupies residues 1-415 (MDSKESLSPP…TTAAGPPPKL (415 aa)). At R25 the chain carries Omega-N-methylarginine. The interval 39-82 (APVRVPASSPSLAPAAQPDSKQQRLAVDFPKGSASNAQQPDLSR) is disordered. The span at 44–58 (PASSPSLAPAAQPDS) shows a compositional bias: low complexity. Phosphoserine is present on residues S47, S115, S136, and S143. The tract at residues 132 to 186 (NRSASGADNPRSTAPAAGSAAPTEGFPKTHSDLASERQNPKGQTGGSAGSAKLHP) is disordered. The segment covering 143–156 (STAPAAGSAAPTEG) has biased composition (low complexity). Over residues 158-170 (PKTHSDLASERQN) the composition is skewed to basic and acidic residues. S203, S211, and S226 each carry phosphoserine. K258 is covalently cross-linked (Glycyl lysine isopeptide (Lys-Gly) (interchain with G-Cter in SUMO2)). Residues K277 and K293 each participate in a glycyl lysine isopeptide (Lys-Gly) (interchain with G-Cter in SUMO); alternate cross-link. Residues K277 and K293 each participate in a glycyl lysine isopeptide (Lys-Gly) (interchain with G-Cter in SUMO2); alternate cross-link. 2 positions are modified to phosphoserine: S307 and S400. Residue K414 forms a Glycyl lysine isopeptide (Lys-Gly) (interchain with G-Cter in ubiquitin) linkage. 2 consecutive NR C4-type zinc fingers follow at residues 416–436 (CLVCSDEASGCHYGVLTCGSC) and 452–476 (CAGRNDCIIDKIRRKNCPACRYRKC). Positions 416–481 (CLVCSDEASG…RYRKCLQAGM (66 aa)) form a DNA-binding region, nuclear receptor. 4 positions are modified to N6-acetyllysine: K475, K487, K489, and K490. Positions 480 to 772 (GMNLEARKTK…NIKKLLFHQK (293 aa)) are interaction with CLOCK. The tract at residues 482-518 (NLEARKTKKKIKGIQQTSTGVSQETSENPSNRTVVPA) is hinge. The interval 494-513 (GIQQTSTGVSQETSENPSNR) is disordered. Polar residues predominate over residues 499-513 (STGVSQETSENPSNR). The 235-residue stretch at 519 to 753 (ALPQLTPTLV…FPEMLAEIIT (235 aa)) folds into the NR LBD domain. Residues 527–692 (LVSLLEVIEP…EIRMTYIKEL (166 aa)) are interaction with CRY1. A Glycyl lysine isopeptide (Lys-Gly) (interchain with G-Cter in SUMO) cross-link involves residue K698.

The protein belongs to the nuclear hormone receptor family. NR3 subfamily. Heteromultimeric cytoplasmic complex with HSP90AA1, HSPA1A/HSPA1B, and FKBP5 or another immunophilin such as PPID, STIP1, or the immunophilin homolog PPP5C. Upon ligand binding FKBP5 dissociates from the complex and FKBP4 takes its place, thereby linking the complex to dynein and mediating transport to the nucleus, where the complex dissociates. Probably forms a complex composed of chaperones HSP90 and HSP70, co-chaperones CDC37, PPP5C, TSC1 and client protein TSC2, CDK4, AKT, RAF1 and NR3C1; this complex does not contain co-chaperones STIP1/HOP and PTGES3/p23. Directly interacts with UNC45A. Binds to DNA as a homodimer, and as heterodimer with NR3C2 or the retinoid X receptor. Binds STAT5A and STAT5B homodimers and heterodimers. Interacts with NRIP1, POU2F1, POU2F2 and TRIM28. Interacts with several coactivator complexes, including the SMARCA4 complex, CREBBP/EP300, TADA2L (Ada complex) and p160 coactivators such as NCOA2 and NCOA6. Interaction with BAG1 inhibits transactivation. Interacts with HEXIM1 and TGFB1I1. Interacts with NCOA1. Interacts with NCOA3, SMARCA4, SMARCC1, SMARCD1, and SMARCE1. Interacts with CLOCK, CRY1 and CRY2 in a ligand-dependent fashion. Interacts with CIART. Interacts with RWDD3. Interacts with UBE2I/UBC9 and this interaction is enhanced in the presence of RWDD3. Interacts with GRIP1. Interacts with NR4A3 (via nuclear receptor DNA-binding domain), represses transcription activity of NR4A3 on the POMC promoter Nur response element (NurRE). Directly interacts with PNRC2 to attract and form a complex with UPF1 and DCP1A; the interaction leads to rapid mRNA degradation. Interacts with GSK3B. Interacts with FNIP1 and FNIP2. Interacts (via C-terminus) with HNRNPU (via C-terminus). Interacts with MCM3AP. Interacts (via domain NR LBD) with HSP90AA1 and HSP90AB1. In the absence of hormonal ligand, interacts with TACC1. Interacts (via NR LBD domain) with ZNF764 (via KRAB domain); the interaction regulates transcription factor activity of NR3C1 by directing its actions toward certain biologic pathways. In terms of processing, acetylation by CLOCK reduces its binding to glucocorticoid response elements and its transcriptional activity. Post-translationally, increased proteasome-mediated degradation in response to glucocorticoids. Phosphorylated in the absence of hormone; becomes hyperphosphorylated in the presence of glucocorticoid. The Ser-203, Ser-226 and Ser-399-phosphorylated forms are mainly cytoplasmic, and the Ser-211-phosphorylated form is nuclear. Phosphorylation at Ser-211 increases transcriptional activity. Phosphorylation at Ser-203, Ser-226 and Ser-399 decreases signaling capacity. Phosphorylation at Ser-399 may protect from glucocorticoid-induced apoptosis. Phosphorylation at Ser-203 and Ser-211 is not required in regulation of chromosome segregation. May be dephosphorylated by PPP5C, attenuates NR3C1 action. In terms of processing, ubiquitinated by UBR5, leading to its degradation: UBR5 specifically recognizes and binds ligand-bound NR3C1 when it is not associated with coactivators (NCOAs). In presence of NCOAs, the UBR5-degron is not accessible, preventing its ubiquitination and degradation. Post-translationally, sumoylation at Lys-277 and Lys-293 negatively regulates its transcriptional activity. Sumoylation at Lys-698 positively regulates its transcriptional activity in the presence of RWDD3. Sumoylation at Lys-277 and Lys-293 is dispensable whereas sumoylation at Lys-698 is critical for the stimulatory effect of RWDD3 on its transcriptional activity. Heat shock increases sumoylation in a RWDD3-dependent manner.

The protein resides in the cytoplasm. It localises to the nucleus. Its subcellular location is the mitochondrion. It is found in the cytoskeleton. The protein localises to the spindle. The protein resides in the microtubule organizing center. It localises to the centrosome. Its subcellular location is the chromosome. It is found in the nucleoplasm. Receptor for glucocorticoids (GC). Has a dual mode of action: as a transcription factor that binds to glucocorticoid response elements (GRE), both for nuclear and mitochondrial DNA, and as a modulator of other transcription factors. Affects inflammatory responses, cellular proliferation and differentiation in target tissues. Involved in chromatin remodeling. Plays a role in rapid mRNA degradation by binding to the 5' UTR of target mRNAs and interacting with PNRC2 in a ligand-dependent manner which recruits the RNA helicase UPF1 and the mRNA-decapping enzyme DCP1A, leading to RNA decay. Could act as a coactivator for STAT5-dependent transcription upon growth hormone (GH) stimulation and could reveal an essential role of hepatic GR in the control of body growth. Mediates glucocorticoid-induced apoptosis. Promotes accurate chromosome segregation during mitosis. May act as a tumor suppressor. May play a negative role in adipogenesis through the regulation of lipolytic and antilipogenic gene expression. This Oryctolagus cuniculus (Rabbit) protein is Glucocorticoid receptor (NR3C1).